The primary structure comprises 429 residues: Methylenetetrahydrofolate--tRNA-(uracil-5-)-methyltransferase TrmFO (429 aa).

7–12 (GAGLAG) contributes to the FAD binding site.

It belongs to the MnmG family. TrmFO subfamily. FAD serves as cofactor.

The protein resides in the cytoplasm. It carries out the reaction uridine(54) in tRNA + (6R)-5,10-methylene-5,6,7,8-tetrahydrofolate + NADH + H(+) = 5-methyluridine(54) in tRNA + (6S)-5,6,7,8-tetrahydrofolate + NAD(+). The enzyme catalyses uridine(54) in tRNA + (6R)-5,10-methylene-5,6,7,8-tetrahydrofolate + NADPH + H(+) = 5-methyluridine(54) in tRNA + (6S)-5,6,7,8-tetrahydrofolate + NADP(+). In terms of biological role, catalyzes the folate-dependent formation of 5-methyl-uridine at position 54 (M-5-U54) in all tRNAs. The sequence is that of Methylenetetrahydrofolate--tRNA-(uracil-5-)-methyltransferase TrmFO from Thermosipho africanus (strain TCF52B).